We begin with the raw amino-acid sequence, 484 residues long: Cobyric acid synthase (484 aa).

Positions 248–435 (VLKVIVPVLP…LHGLFEGSQS (188 aa)) constitute a GATase cobBQ-type domain. Cysteine 329 acts as the Nucleophile in catalysis. Histidine 427 is an active-site residue.

It belongs to the CobB/CobQ family. CobQ subfamily.

The protein operates within cofactor biosynthesis; adenosylcobalamin biosynthesis. In terms of biological role, catalyzes amidations at positions B, D, E, and G on adenosylcobyrinic A,C-diamide. NH(2) groups are provided by glutamine, and one molecule of ATP is hydrogenolyzed for each amidation. The protein is Cobyric acid synthase of Pseudomonas putida (strain W619).